The primary structure comprises 736 residues: Gingipain R2 (736 aa).

The first 24 residues, 1–24 (MKKNFSRIVSIVAFSSLLGGMAFA), serve as a signal peptide directing secretion. A propeptide spanning residues 25–229 (QPAERGRNPQ…SVFMNYEATR (205 aa)) is cleaved from the precursor. Ca(2+) is bound by residues Asp-307, Val-329, Asp-332, Tyr-334, Glu-336, Glu-390, and His-395. The active-site Proton donor is the His-440. The active-site Nucleophile is Cys-473. Residues Phe-478, Glu-487, Asp-521, Glu-522, Glu-525, His-531, Asp-613, and Glu-639 each coordinate Ca(2+).

This sequence belongs to the peptidase C25 family.

The protein resides in the secreted. It carries out the reaction Hydrolysis of proteins and small molecule substrates, with a preference for Arg in P1.. Inhibited by human histatin-3 1/24 (histatin-5). Its function is as follows. Thiol protease. Acts synergistically with RgpA to catalyze the maturation of fimbrial subunits, such as FimA. Its proteolytic activity is a major factor in both periodontal tissue destruction and in evasion of host defense mechanisms. This chain is Gingipain R2 (rgpB), found in Porphyromonas gingivalis (strain ATCC BAA-308 / W83).